Here is a 156-residue protein sequence, read N- to C-terminus: NAD(P)H-quinone oxidoreductase subunit N (156 aa).

The protein belongs to the complex I NdhN subunit family. NDH-1 can be composed of about 15 different subunits; different subcomplexes with different compositions have been identified which probably have different functions.

Its subcellular location is the cellular thylakoid membrane. The enzyme catalyses a plastoquinone + NADH + (n+1) H(+)(in) = a plastoquinol + NAD(+) + n H(+)(out). The catalysed reaction is a plastoquinone + NADPH + (n+1) H(+)(in) = a plastoquinol + NADP(+) + n H(+)(out). NDH-1 shuttles electrons from an unknown electron donor, via FMN and iron-sulfur (Fe-S) centers, to quinones in the respiratory and/or the photosynthetic chain. The immediate electron acceptor for the enzyme in this species is believed to be plastoquinone. Couples the redox reaction to proton translocation, and thus conserves the redox energy in a proton gradient. Cyanobacterial NDH-1 also plays a role in inorganic carbon-concentration. The chain is NAD(P)H-quinone oxidoreductase subunit N from Prochlorococcus marinus subsp. pastoris (strain CCMP1986 / NIES-2087 / MED4).